Reading from the N-terminus, the 401-residue chain is Imidazolonepropionase (401 aa).

Residues histidine 66 and histidine 68 each coordinate Fe(3+). Zn(2+) contacts are provided by histidine 66 and histidine 68. Positions 75, 138, and 171 each coordinate 4-imidazolone-5-propanoate. Tyrosine 138 contributes to the N-formimidoyl-L-glutamate binding site. Histidine 236 is a binding site for Fe(3+). Residue histidine 236 participates in Zn(2+) binding. Glutamine 239 serves as a coordination point for 4-imidazolone-5-propanoate. Fe(3+) is bound at residue aspartate 311. Aspartate 311 serves as a coordination point for Zn(2+). N-formimidoyl-L-glutamate-binding residues include asparagine 313 and glycine 315. Threonine 316 lines the 4-imidazolone-5-propanoate pocket.

It belongs to the metallo-dependent hydrolases superfamily. HutI family. Requires Zn(2+) as cofactor. It depends on Fe(3+) as a cofactor.

The protein resides in the cytoplasm. The catalysed reaction is 4-imidazolone-5-propanoate + H2O = N-formimidoyl-L-glutamate. It functions in the pathway amino-acid degradation; L-histidine degradation into L-glutamate; N-formimidoyl-L-glutamate from L-histidine: step 3/3. Functionally, catalyzes the hydrolytic cleavage of the carbon-nitrogen bond in imidazolone-5-propanoate to yield N-formimidoyl-L-glutamate. It is the third step in the universal histidine degradation pathway. The polypeptide is Imidazolonepropionase (Pseudomonas fluorescens (strain ATCC BAA-477 / NRRL B-23932 / Pf-5)).